A 620-amino-acid chain; its full sequence is uncharacterized protein (620 aa).

Residues Arg-324 to Thr-586 enclose the Radical SAM core domain. Cys-338, Cys-342, and Cys-345 together coordinate [4Fe-4S] cluster. An N6-(pyridoxal phosphate)lysine modification is found at Lys-552.

Belongs to the radical SAM superfamily. KamA family. Requires [4Fe-4S] cluster as cofactor. It depends on pyridoxal 5'-phosphate as a cofactor.

This is an uncharacterized protein from Methanocaldococcus jannaschii (strain ATCC 43067 / DSM 2661 / JAL-1 / JCM 10045 / NBRC 100440) (Methanococcus jannaschii).